Consider the following 252-residue polypeptide: Mitochondrial cardiolipin hydrolase (252 aa).

At 1 to 4 (MGRL) the chain is on the mitochondrial intermembrane side. The required for mitochondrial localization stretch occupies residues 1–39 (MGRLSWQVAAAAAVGLALTLEALPWVLRWLRSRRRRPRR). The helical transmembrane segment at 5–27 (SWQVAAAAAVGLALTLEALPWVL) threads the bilayer. Over 28–252 (RWLRSRRRRP…TCGTSSESQT (225 aa)) the chain is Cytoplasmic. The segment at 45 to 78 (PSQVTCTEALLRAPGAELAELPEGCPCGLPHGES) adopts a C3H1-type; atypical zinc-finger fold. Positions 151-178 (DPGYMHHKFAIVDKRVLITGSLNWTTQA) constitute a PLD phosphodiesterase domain. Catalysis depends on residues histidine 156, lysine 158, and aspartate 163.

It belongs to the phospholipase D family. MitoPLD/Zucchini subfamily. Homodimer. Interacts with MOV10L1. Interacts with MIGA1 and MIGA2; possibly facilitating homodimer formation. Interacts with GK2. Predominantly expressed in testis and ovary, but not limited to gonads (at protein level). It is also found in brain, heart, pituitary gland, prostate, pancreas, thyroid, bone marrow, lung and muscle.

The protein localises to the mitochondrion outer membrane. Its subcellular location is the golgi apparatus. The catalysed reaction is a cardiolipin + H2O = a 1,2-diacyl-sn-glycero-3-phospho-(1'-sn-glycerol) + a 1,2-diacyl-sn-glycero-3-phosphate + H(+). MYC stimulates its phospholipase activity. MIGA1 and MIGA2 increase PLD6 self-association affinity and affects the homodimer conformation facilitating its phospholipase activity over the nuclease activity. Single stranded DNA (ssDNA) hydrolase activity does not depend upon, but is stimulated by the presence of Ca(2+) and Mn(2+). Functionally, presents phospholipase and nuclease activities, depending on the different physiological conditions. Interaction with Mitoguardin (MIGA1 or MIGA2) affects the dimer conformation, facilitating the lipase activity over the nuclease activity. Plays a key role in mitochondrial fusion and fission via its phospholipase activity. In its phospholipase role, it uses the mitochondrial lipid cardiolipin as substrate to generate phosphatidate (PA or 1,2-diacyl-sn-glycero-3-phosphate), a second messenger signaling lipid. Production of PA facilitates Mitofusin-mediated fusion, whereas the cleavage of PA by the Lipin family of phosphatases produces diacylgycerol (DAG) which promotes mitochondrial fission. Both Lipin and DAG regulate mitochondrial dynamics and membrane fusion/fission, important processes for adapting mitochondrial metabolism to changes in cell physiology. Mitochondrial fusion enables cells to cope with the increased nucleotide demand during DNA synthesis. Mitochondrial function and dynamics are closely associated with biological processes such as cell growth, proliferation, and differentiation. Mediator of MYC activity, promotes mitochondrial fusion and activates AMPK which in turn inhibits YAP/TAZ, thereby inducing cell growth and proliferation. The endonuclease activity plays a critical role in PIWI-interacting RNA (piRNA) biogenesis during spermatogenesis. Implicated in spermatogenesis and sperm fertility in testicular germ cells, its single strand-specific nuclease activity is critical for the biogenesis/maturation of PIWI-interacting RNA (piRNA). MOV10L1 selectively binds to piRNA precursors and funnels them to the endonuclease that catalyzes the first cleavage step of piRNA processing to generate piRNA intermediate fragments that are subsequently loaded to Piwi proteins. Cleaves either DNA or RNA substrates with similar affinity, producing a 5' phosphate end, in this way it participates in the processing of primary piRNA transcripts. piRNAs provide essential protection against the activity of mobile genetic elements. piRNA-mediated transposon silencing is thus critical for maintaining genome stability, in particular in germline cells when transposons are mobilized as a consequence of wide-spread genomic demethylation. PA may act as signaling molecule in the recognition/transport of the precursor RNAs of primary piRNAs. Interacts with tesmin in testes, suggesting a role in spermatogenesis via association with its interacting partner. The polypeptide is Mitochondrial cardiolipin hydrolase (PLD6) (Homo sapiens (Human)).